We begin with the raw amino-acid sequence, 240 residues long: Ribonuclease PH (240 aa).

Residues R86 and 124 to 126 (GTR) contribute to the phosphate site.

It belongs to the RNase PH family. As to quaternary structure, homohexameric ring arranged as a trimer of dimers.

The enzyme catalyses tRNA(n+1) + phosphate = tRNA(n) + a ribonucleoside 5'-diphosphate. Phosphorolytic 3'-5' exoribonuclease that plays an important role in tRNA 3'-end maturation. Removes nucleotide residues following the 3'-CCA terminus of tRNAs; can also add nucleotides to the ends of RNA molecules by using nucleoside diphosphates as substrates, but this may not be physiologically important. Probably plays a role in initiation of 16S rRNA degradation (leading to ribosome degradation) during starvation. The sequence is that of Ribonuclease PH from Mannheimia succiniciproducens (strain KCTC 0769BP / MBEL55E).